We begin with the raw amino-acid sequence, 360 residues long: Phospho-N-acetylmuramoyl-pentapeptide-transferase (360 aa).

10 helical membrane-spanning segments follow: residues 25 to 45, 73 to 93, 97 to 117, 132 to 152, 168 to 188, 199 to 219, 236 to 256, 263 to 283, 288 to 308, and 338 to 358; these read RGILGVLTALALSLWLGPWMI, TMGGALILTAIAVSTLLWADL, YVWVVLAVTLLFGAIGWVDDY, WKYFWQSVFGLAAAIFLYMTA, VSIPLGIGFVVLTYFVIVGSS, GLAILPTVMVAGALAVFCYLS, AGELIVFCAALVGAGLGFLWF, VFMGDVGALALGAALGTIAVI, VVLFIMGGVFVMETLSVIIQV, and VIVRFWIITVILVLIGLATLK.

Belongs to the glycosyltransferase 4 family. MraY subfamily. It depends on Mg(2+) as a cofactor.

It is found in the cell inner membrane. It catalyses the reaction UDP-N-acetyl-alpha-D-muramoyl-L-alanyl-gamma-D-glutamyl-meso-2,6-diaminopimeloyl-D-alanyl-D-alanine + di-trans,octa-cis-undecaprenyl phosphate = di-trans,octa-cis-undecaprenyl diphospho-N-acetyl-alpha-D-muramoyl-L-alanyl-D-glutamyl-meso-2,6-diaminopimeloyl-D-alanyl-D-alanine + UMP. The protein operates within cell wall biogenesis; peptidoglycan biosynthesis. Catalyzes the initial step of the lipid cycle reactions in the biosynthesis of the cell wall peptidoglycan: transfers peptidoglycan precursor phospho-MurNAc-pentapeptide from UDP-MurNAc-pentapeptide onto the lipid carrier undecaprenyl phosphate, yielding undecaprenyl-pyrophosphoryl-MurNAc-pentapeptide, known as lipid I. This chain is Phospho-N-acetylmuramoyl-pentapeptide-transferase, found in Ectopseudomonas mendocina (strain ymp) (Pseudomonas mendocina).